Here is a 235-residue protein sequence, read N- to C-terminus: Probable ribosomal RNA small subunit methyltransferase A (235 aa).

His-9, Leu-11, Gly-34, Glu-55, Asp-78, and Asn-93 together coordinate S-adenosyl-L-methionine.

It belongs to the class I-like SAM-binding methyltransferase superfamily. rRNA adenine N(6)-methyltransferase family. RsmA subfamily.

The protein resides in the cytoplasm. Its function is as follows. Specifically dimethylates two adjacent adenosines in the loop of a conserved hairpin near the 3'-end of 16S rRNA in the 30S particle. May play a critical role in biogenesis of 30S subunits. In Pyrobaculum islandicum (strain DSM 4184 / JCM 9189 / GEO3), this protein is Probable ribosomal RNA small subunit methyltransferase A.